We begin with the raw amino-acid sequence, 204 residues long: MAEQEPTAEQLAQIAAENEEDEHSVNYKPPAQKSIQEIQELDKDDESLRKYKEALLGRVAVSADPNVPNVVVTRLTLVCSTAPGPLELDLTGDLESFKKQSFVLKEGVEYRIKISFRVNREIVSGMKYIQHTYRKGVKIDKTDYMVGSYGPRAEEYEFLTPMEEAPKGMLARGSYNIKSRFTDDDRTDHLSWEWNLTIKKEWKD.

The disordered stretch occupies residues 1–36 (MAEQEPTAEQLAQIAAENEEDEHSVNYKPPAQKSIQ). N-acetylalanine is present on A2. A Phosphoserine modification is found at S34. K43 is subject to N6-acetyllysine. S47 carries the phosphoserine modification. The tract at residues 66–83 (NVPNVVVTRLTLVCSTAP) is hydrophobic. S101 is modified (phosphoserine; by PKA). K105 is subject to N6-acetyllysine. S115 carries the phosphoserine; by PKC modification. K127 is subject to N6-acetyllysine. Residues K138 and K141 each participate in a glycyl lysine isopeptide (Lys-Gly) (interchain with G-Cter in SUMO1); alternate cross-link. Residues K138 and K141 each participate in a glycyl lysine isopeptide (Lys-Gly) (interchain with G-Cter in SUMO2); alternate cross-link. Position 141 is an N6-acetyllysine; alternate (K141). The residue at position 141 (K141) is an N6-succinyllysine; alternate. Residue K178 is modified to N6-acetyllysine.

It belongs to the Rho GDI family. As to quaternary structure, monomer. Interacts with FER. Interacts with PLXNB3. Forms a heterodimer with RAC1. Interacts with RHOA, the affinity is increased by three orders of magnitude when RHOA is prenylated. Interacts with PSMD10; the interaction increases ARHGDIA association with RHOA, leading to ARHGDIA-mediated inactivation of RHOA and ROCK and prolonged AKT activation. Interacts with KANK2; the interaction is direct and may regulate the interaction of ARHGDIA with RHOA, RAC1 and CDC42. Interacts with RHOC. Interacts with CDC42. Interacts with NGFR (via death domain); NGFR binding decreases the affinity for RHOA. As to expression, brain, lung, thymus, spleen, small intestine, and kidney, and weakly in heart and liver.

The protein resides in the cytoplasm. Its function is as follows. Controls Rho proteins homeostasis. Regulates the GDP/GTP exchange reaction of the Rho proteins by inhibiting the dissociation of GDP from them, and the subsequent binding of GTP to them. Retains Rho proteins such as CDC42, RAC1 and RHOA in an inactive cytosolic pool, regulating their stability and protecting them from degradation. Actively involved in the recycling and distribution of activated Rho GTPases in the cell, mediates extraction from membranes of both inactive and activated molecules due its exceptionally high affinity for prenylated forms. Through the modulation of Rho proteins, may play a role in cell motility regulation. In glioma cells, inhibits cell migration and invasion by mediating the signals of SEMA5A and PLXNB3 that lead to inactivation of RAC1. In Bos taurus (Bovine), this protein is Rho GDP-dissociation inhibitor 1 (ARHGDIA).